A 630-amino-acid polypeptide reads, in one-letter code: Sodium-dependent serotonin transporter (630 aa).

The Cytoplasmic segment spans residues 1 to 87; sequence METTPLNSQK…ERETWGKKVD (87 aa). The disordered stretch occupies residues 31–59; it reads VPTPGDKVESGQISNGYSAVPSPGAGDDT. Residue Y47 is modified to Phosphotyrosine. A helical transmembrane segment spans residues 88–112; it reads FLLSVIGYAVDLGNVWRFPYICYQN. Na(+) contacts are provided by G94, A96, V97, D98, and N101. Position 98 (D98) interacts with serotonin. Residues 113-115 lie on the Extracellular side of the membrane; the sequence is GGG. Residues 116-135 traverse the membrane as a helical segment; that stretch reads AFLIPYTIMAIFGGIPLFYM. Over 136–160 the chain is Cytoplasmic; it reads ELALGQYHRNGCISIWRKICPIFKG. Y142 bears the Phosphotyrosine mark. The chain crosses the membrane as a helical span at residues 161–186; it reads IGYAICIIAFYIASYYNTIMAWALYY. Topologically, residues 187–252 are extracellular; that stretch reads LISSFTDQLP…KGLQDLGGIS (66 aa). Cysteines 200 and 209 form a disulfide. N208 and N217 each carry an N-linked (GlcNAc...) asparagine glycan. Residues 253-271 form a helical membrane-spanning segment; that stretch reads WQLALCIMLIFTVIYFSIW. The Cytoplasmic segment spans residues 272 to 277; the sequence is KGVKTS. A Phosphothreonine modification is found at T276. The helical transmembrane segment at 278 to 297 threads the bilayer; sequence GKVVWVTATFPYIILSVLLV. The Extracellular segment spans residues 298 to 324; the sequence is RGATLPGAWRGVLFYLKPNWQKLLETG. The helical transmembrane segment at 325–347 threads the bilayer; the sequence is VWIDAAAQIFFSLGPGFGVLLAF. S336 is a Na(+) binding site. The Cytoplasmic segment spans residues 348-360; the sequence is ASYNKFNNNCYQD. The helical transmembrane segment at 361–380 threads the bilayer; sequence ALVTSVVNCMTSFVSGFVIF. N368 contributes to the Na(+) binding site. The Extracellular portion of the chain corresponds to 381-421; the sequence is TVLGYMAEMRNEDVSEVAKDAGPSLLFITYAEAIANMPAST. Residues 422–443 traverse the membrane as a helical segment; it reads FFAIIFFLMLITLGLDSTFAGL. Na(+) contacts are provided by L434, D437, and S438. T439 contributes to the serotonin binding site. Residues 444 to 463 are Cytoplasmic-facing; sequence EGVITAVLDEFPHIWAKRRE. Residues 464–483 form a helical membrane-spanning segment; sequence WFVLAVVITCFFGSLVTLTF. Residues 484-494 lie on the Extracellular side of the membrane; that stretch reads GGAYVVKLLEE. Positions 494 and 495 each coordinate serotonin. Residues 495–516 form a helical membrane-spanning segment; the sequence is YATGPAVLTVALIEAVAVSWFY. Topologically, residues 517-538 are cytoplasmic; that stretch reads GITQFCRDVKEMLGFSPGWFWR. Residues 539–558 form a helical membrane-spanning segment; sequence ICWVAISPLFLLFIICSFLM. Serotonin is bound by residues F556 and S559. The Extracellular portion of the chain corresponds to 559-574; it reads SPPQLRLFQYNYPHWS. Residues 575 to 595 form a helical membrane-spanning segment; sequence IILGYCIGTSSFVCIPTYIAY. Over 596 to 630 the chain is Cytoplasmic; sequence RLISTPGTFKERIIKSITPETPTEIPCGDVRLNAV. The interaction with RAB4A stretch occupies residues 616 to 624; the sequence is TPTEIPCGD.

The protein belongs to the sodium:neurotransmitter symporter (SNF) (TC 2.A.22) family. SLC6A4 subfamily. Monomer or homooligomer. Interacts (via C-terminus) with SCAMP2; the interaction is direct and retains transporter molecules intracellularly. Interacts with filamentous actin and STX1A. Interacts (via the N-terminus) with STX1A (via the H3 domain); this interaction regulates SLC4A6 channel conductance. Interacts with SEC23A, SEC24C and PATJ. Interacts with NOS1; the interaction may diminish the cell surface localization of SERT in the brain and, correspondingly, reduce serotonin reuptake. Interacts with TGFB1I1. Interacts with ITGAV:ITGB3. Interacts (via C-terminus) with ITGB3; this interaction regulates SLC6A4 trafficking. In terms of processing, phosphorylation at Thr-276 increases 5-HT uptake and is required for cGMP-mediated SERT regulation.

It localises to the cell membrane. The protein resides in the endomembrane system. The protein localises to the endosome membrane. Its subcellular location is the synapse. It is found in the cell junction. It localises to the focal adhesion. The protein resides in the cell projection. The protein localises to the neuron projection. It carries out the reaction serotonin(out) + K(+)(in) + Na(+)(out) + H(+)(in) = serotonin(in) + K(+)(out) + Na(+)(in) + H(+)(out). Serotonin transporter that cotransports serotonin with one Na(+) ion in exchange for one K(+) ion and possibly one proton in an overall electroneutral transport cycle. Transports serotonin across the plasma membrane from the extracellular compartment to the cytosol thus limiting serotonin intercellular signaling. Essential for serotonin homeostasis in the central nervous system. In the developing somatosensory cortex, acts in glutamatergic neurons to control serotonin uptake and its trophic functions accounting for proper spatial organization of cortical neurons and elaboration of sensory circuits. In the mature cortex, acts primarily in brainstem raphe neurons to mediate serotonin uptake from the synaptic cleft back into the pre-synaptic terminal thus terminating serotonin signaling at the synapse. Modulates mucosal serotonin levels in the gastrointestinal tract through uptake and clearance of serotonin in enterocytes. Required for enteric neurogenesis and gastrointestinal reflexes. Regulates blood serotonin levels by ensuring rapid high affinity uptake of serotonin from plasma to platelets, where it is further stored in dense granules via vesicular monoamine transporters and then released upon stimulation. Mechanistically, the transport cycle starts with an outward-open conformation having Na1(+) and Cl(-) sites occupied. The binding of a second extracellular Na2(+) ion and serotonin substrate leads to structural changes to outward-occluded to inward-occluded to inward-open, where the Na2(+) ion and serotonin are released into the cytosol. Binding of intracellular K(+) ion induces conformational transitions to inward-occluded to outward-open and completes the cycle by releasing K(+) possibly together with a proton bound to Asp-98 into the extracellular compartment. Na1(+) and Cl(-) ions remain bound throughout the transport cycle. Additionally, displays serotonin-induced channel-like conductance for monovalent cations, mainly Na(+) ions. The channel activity is uncoupled from the transport cycle and may contribute to the membrane resting potential or excitability. The sequence is that of Sodium-dependent serotonin transporter (SLC6A4) from Macaca mulatta (Rhesus macaque).